The primary structure comprises 247 residues: Oil body-associated protein 2B (247 aa).

Positions 1-28 are disordered; the sequence is MASSDKVPVACPASSGDGKEPMGNPTKT.

Belongs to the OBAP family.

The protein is Oil body-associated protein 2B of Arabidopsis thaliana (Mouse-ear cress).